Reading from the N-terminus, the 99-residue chain is Cyclin-dependent kinases regulatory subunit (99 aa).

Belongs to the CKS family. Forms a homohexamer that can probably bind six kinase subunits.

Its function is as follows. Binds to the catalytic subunit of the cyclin dependent kinases (Cdc2) and is essential for their biological function. This Leishmania mexicana protein is Cyclin-dependent kinases regulatory subunit.